A 364-amino-acid chain; its full sequence is Methylthioribose-1-phosphate isomerase (364 aa).

Residues Arg-53–Ala-55, Arg-90, and Gln-203 contribute to the substrate site. The active-site Proton donor is the Asp-244. Asn-254–Lys-255 serves as a coordination point for substrate.

It belongs to the eIF-2B alpha/beta/delta subunits family. MtnA subfamily.

It carries out the reaction 5-(methylsulfanyl)-alpha-D-ribose 1-phosphate = 5-(methylsulfanyl)-D-ribulose 1-phosphate. Its pathway is amino-acid biosynthesis; L-methionine biosynthesis via salvage pathway; L-methionine from S-methyl-5-thio-alpha-D-ribose 1-phosphate: step 1/6. In terms of biological role, catalyzes the interconversion of methylthioribose-1-phosphate (MTR-1-P) into methylthioribulose-1-phosphate (MTRu-1-P). The sequence is that of Methylthioribose-1-phosphate isomerase from Rhizobium meliloti (strain 1021) (Ensifer meliloti).